The primary structure comprises 425 residues: MLDFDLVLFGATGDLAMRKLFVSLYEIYTHYGFKNDSRIIASGRKELSNEEFLTLLCEKTQLHSREKGREFLAHISYLCVRLDNPKDFEELSKIATKNKPLIFYFSISPSFFATTAQHLAKNALNHANTRLILEKPLGHDLKTCKEIFQSISVFFKEEQIFRIDHYLGKKGVQNILELRLNNPILNILWDQISAVEICVYETLGVEERGEFYDKIGALRDMVQNHLLQVLSLIATDLPNNLKDLRKEKIKVLKTLQPPKDFKKQVIRAQYQGYRDENKVHKESQTETFVAIKAFLDTPKFKGVPFYLKHAKKMPHNQASVKIHFNAVNTLEFFLSQDKITLTLKDHQNPLILETHNKQEFLRPYAKLLYDAIQNNHNNFAHQLELEASWVFIDTLIEGFMNNATPLYSYESHHLNESEFLKPLYQ.

2 residues coordinate NADP(+): R44 and K135. H165, K169, E201, and D220 together coordinate substrate. The active-site Proton acceptor is the H225. K311 serves as a coordination point for substrate.

This sequence belongs to the glucose-6-phosphate dehydrogenase family.

It catalyses the reaction D-glucose 6-phosphate + NADP(+) = 6-phospho-D-glucono-1,5-lactone + NADPH + H(+). Its pathway is carbohydrate degradation; pentose phosphate pathway; D-ribulose 5-phosphate from D-glucose 6-phosphate (oxidative stage): step 1/3. In terms of biological role, catalyzes the oxidation of glucose 6-phosphate to 6-phosphogluconolactone. In Helicobacter pylori (strain ATCC 700392 / 26695) (Campylobacter pylori), this protein is Glucose-6-phosphate 1-dehydrogenase.